The sequence spans 540 residues: PTS system alpha-glucoside-specific EIICB component (540 aa).

In terms of domain architecture, PTS EIIC type-1 spans 1–420; that stretch reads MLSQIQRFGG…LNLKTPGREE (420 aa). The next 11 membrane-spanning stretches (helical) occupy residues 12 to 32, 87 to 107, 130 to 150, 174 to 194, 201 to 221, 225 to 245, 277 to 297, 307 to 327, 329 to 349, 352 to 372, and 384 to 404; these read MFTP…AIML, ACLA…AMGM, IAGI…SGLV, FVVI…LLGW, IESL…VYIF, ILIP…GPAV, FALH…ALYF, VAGL…TEPL, FTFL…AATM, VMYI…QFLP, and SMMF…FVVF. One can recognise a PTS EIIB type-1 domain in the interval 448 to 530; the sequence is LGQAAGFLQA…ENLMKDSLST (83 aa). Catalysis depends on cysteine 470, which acts as the Phosphocysteine intermediate; for EIIB activity.

It localises to the cell membrane. In terms of biological role, the phosphoenolpyruvate-dependent sugar phosphotransferase system (sugar PTS), a major carbohydrate active -transport system, catalyzes the phosphorylation of incoming sugar substrates concomitantly with their translocation across the cell membrane. This system is involved in alpha-glucoside transport. Its function is as follows. Involved in the transport and simultaneous phosphorylation at O-6 of the glucosyl moiety of sucrose and its five linkage-isomeric alpha-D-glucosyl-D-fructoses. Can also transport maltose, isomaltose and maltitol, phosphorylating at O-6 of their non-reducing glucose portion. The chain is PTS system alpha-glucoside-specific EIICB component (aglA) from Klebsiella pneumoniae.